Consider the following 566-residue polypeptide: Arginine--tRNA ligase (566 aa).

Positions 123 to 133 (PNIAKPFHIGH) match the 'HIGH' region motif.

This sequence belongs to the class-I aminoacyl-tRNA synthetase family. In terms of assembly, monomer.

The protein resides in the cytoplasm. It carries out the reaction tRNA(Arg) + L-arginine + ATP = L-arginyl-tRNA(Arg) + AMP + diphosphate. The protein is Arginine--tRNA ligase of Halothermothrix orenii (strain H 168 / OCM 544 / DSM 9562).